Here is a 120-residue protein sequence, read N- to C-terminus: Large ribosomal subunit protein uL18 (120 aa).

It belongs to the universal ribosomal protein uL18 family. Part of the 50S ribosomal subunit; part of the 5S rRNA/L5/L18/L25 subcomplex. Contacts the 5S and 23S rRNAs.

This is one of the proteins that bind and probably mediate the attachment of the 5S RNA into the large ribosomal subunit, where it forms part of the central protuberance. The chain is Large ribosomal subunit protein uL18 from Rhodopseudomonas palustris (strain HaA2).